The following is a 932-amino-acid chain: Protein translocase subunit SecA, chloroplastic (932 aa).

Met-95–Thr-102 contacts ATP. Over residues His-632 to Leu-641 the composition is skewed to basic and acidic residues. A disordered region spans residues His-632 to Ser-653.

The protein belongs to the SecA family.

It is found in the plastid. The protein resides in the chloroplast stroma. It localises to the chloroplast thylakoid membrane. It carries out the reaction ATP + H2O + chloroplast-proteinSide 1 = ADP + phosphate + chloroplast-proteinSide 2.. Functionally, has a central role in coupling the hydrolysis of ATP to the transfer of proteins across the thylakoid membrane. The protein is Protein translocase subunit SecA, chloroplastic of Ostreococcus lucimarinus (strain CCE9901).